Consider the following 368-residue polypeptide: Phospho-N-acetylmuramoyl-pentapeptide-transferase (368 aa).

A run of 9 helical transmembrane segments spans residues 50-70, 95-115, 117-137, 156-176, 183-203, 218-238, 242-262, 284-304, and 347-367; these read LLAL…VVPL, PTMG…ILAG, SPLV…GWLD, LCLQ…QQGW, ITLP…LAVF, LDGL…LWLA, PAIA…LLHN, AIAI…LFVL, and TQVV…CWLL.

Belongs to the glycosyltransferase 4 family. MraY subfamily. Mg(2+) is required as a cofactor.

It is found in the cell inner membrane. The enzyme catalyses UDP-N-acetyl-alpha-D-muramoyl-L-alanyl-gamma-D-glutamyl-meso-2,6-diaminopimeloyl-D-alanyl-D-alanine + di-trans,octa-cis-undecaprenyl phosphate = di-trans,octa-cis-undecaprenyl diphospho-N-acetyl-alpha-D-muramoyl-L-alanyl-D-glutamyl-meso-2,6-diaminopimeloyl-D-alanyl-D-alanine + UMP. The protein operates within cell wall biogenesis; peptidoglycan biosynthesis. Functionally, catalyzes the initial step of the lipid cycle reactions in the biosynthesis of the cell wall peptidoglycan: transfers peptidoglycan precursor phospho-MurNAc-pentapeptide from UDP-MurNAc-pentapeptide onto the lipid carrier undecaprenyl phosphate, yielding undecaprenyl-pyrophosphoryl-MurNAc-pentapeptide, known as lipid I. This is Phospho-N-acetylmuramoyl-pentapeptide-transferase from Synechococcus sp. (strain ATCC 27144 / PCC 6301 / SAUG 1402/1) (Anacystis nidulans).